The sequence spans 184 residues: Protein DESIGUAL 3 (184 aa).

Positions 1-24 are cleaved as a signal peptide; it reads MESELGFLVSVVIICADITATVLG. The span at 34-45 shows a compositional bias: basic residues; that stretch reads APHHHHQQHSRH. The tract at residues 34–53 is disordered; sequence APHHHHQQHSRHSGSGCRRS. 3 helical membrane passes run 62-82, 99-119, and 140-160; these read GVAA…LGGC, ILAV…YSTL, and FFLI…AYYV. Asparagine 180 is a glycosylation site (N-linked (GlcNAc...) asparagine).

Belongs to the DESIGUAL family. As to expression, mainly expressed in roots, inflorescences and developing leaves, and, at low levels, in mature leaves.

The protein resides in the endoplasmic reticulum membrane. Its function is as follows. Involved, partially redundantly with VCC/DEAL1 and DEAL2, to ensure bilateral symmetry development and early leaf margin patterning, probably via the regulation of auxin and CUC2 distribution. This Arabidopsis thaliana (Mouse-ear cress) protein is Protein DESIGUAL 3.